Reading from the N-terminus, the 319-residue chain is Aspartate carbamoyltransferase catalytic subunit (319 aa).

Carbamoyl phosphate is bound by residues Arg-57 and Thr-58. Residue Lys-85 participates in L-aspartate binding. Carbamoyl phosphate contacts are provided by Arg-107, His-135, and Gln-138. Arg-168 and Arg-222 together coordinate L-aspartate. Residues Gly-263 and Pro-264 each contribute to the carbamoyl phosphate site.

The protein belongs to the aspartate/ornithine carbamoyltransferase superfamily. ATCase family. As to quaternary structure, heterododecamer (2C3:3R2) of six catalytic PyrB chains organized as two trimers (C3), and six regulatory PyrI chains organized as three dimers (R2).

The enzyme catalyses carbamoyl phosphate + L-aspartate = N-carbamoyl-L-aspartate + phosphate + H(+). Its pathway is pyrimidine metabolism; UMP biosynthesis via de novo pathway; (S)-dihydroorotate from bicarbonate: step 2/3. In terms of biological role, catalyzes the condensation of carbamoyl phosphate and aspartate to form carbamoyl aspartate and inorganic phosphate, the committed step in the de novo pyrimidine nucleotide biosynthesis pathway. This is Aspartate carbamoyltransferase catalytic subunit from Paracoccus denitrificans (strain Pd 1222).